The chain runs to 461 residues: Argininosuccinate lyase (461 aa).

The protein belongs to the lyase 1 family. Argininosuccinate lyase subfamily.

It localises to the cytoplasm. The enzyme catalyses 2-(N(omega)-L-arginino)succinate = fumarate + L-arginine. Its pathway is amino-acid biosynthesis; L-arginine biosynthesis; L-arginine from L-ornithine and carbamoyl phosphate: step 3/3. The polypeptide is Argininosuccinate lyase (Chlorobium chlorochromatii (strain CaD3)).